We begin with the raw amino-acid sequence, 290 residues long: 4-hydroxybenzoate octaprenyltransferase (290 aa).

6 helical membrane-spanning segments follow: residues Trp-41 to Met-61, Trp-89 to Leu-109, Phe-133 to Phe-153, Gly-158 to Tyr-178, Phe-202 to Ile-224, and Trp-269 to Gly-289.

The protein belongs to the UbiA prenyltransferase family. Requires Mg(2+) as cofactor.

The protein localises to the cell inner membrane. It catalyses the reaction all-trans-octaprenyl diphosphate + 4-hydroxybenzoate = 4-hydroxy-3-(all-trans-octaprenyl)benzoate + diphosphate. The protein operates within cofactor biosynthesis; ubiquinone biosynthesis. Its function is as follows. Catalyzes the prenylation of para-hydroxybenzoate (PHB) with an all-trans polyprenyl group. Mediates the second step in the final reaction sequence of ubiquinone-8 (UQ-8) biosynthesis, which is the condensation of the polyisoprenoid side chain with PHB, generating the first membrane-bound Q intermediate 3-octaprenyl-4-hydroxybenzoate. The protein is 4-hydroxybenzoate octaprenyltransferase of Burkholderia vietnamiensis (strain G4 / LMG 22486) (Burkholderia cepacia (strain R1808)).